Here is a 354-residue protein sequence, read N- to C-terminus: Protein-arginine kinase (354 aa).

The region spanning 24 to 254 is the Phosphagen kinase C-terminal domain; it reads IVLSSRIRLA…QQIIQQEKMA (231 aa). ATP is bound by residues 27 to 31, H92, R125, 176 to 180, and 207 to 212; these read SSRIR, RASVM, and RGIYGE. The short motif at 337–342 is the RDXXRA motif of the pArg binding pocket involved in allosteric regulation element; the sequence is RDYRRA.

The protein belongs to the ATP:guanido phosphotransferase family.

It catalyses the reaction L-arginyl-[protein] + ATP = N(omega)-phospho-L-arginyl-[protein] + ADP + H(+). Its activity is regulated as follows. Appears to be allosterically activated by the binding of pArg-containing polypeptides to the pArg-binding pocket localized in the C-terminal domain of McsB. Catalyzes the specific phosphorylation of arginine residues in a large number of proteins. Is part of the bacterial stress response system. Protein arginine phosphorylation has a physiologically important role and is involved in the regulation of many critical cellular processes, such as protein homeostasis, motility, competence, and stringent and stress responses, by regulating gene expression and protein activity. This Bacillus anthracis (strain A0248) protein is Protein-arginine kinase.